Consider the following 635-residue polypeptide: Threonine--tRNA ligase (635 aa).

A TGS domain is found at 1 to 62; the sequence is MITITLPDGS…EHDAMLRIIT (62 aa). The segment at 244 to 535 is catalytic; it reads DHRKIGKVQD…LIEHYAGIWP (292 aa). Cys335, His386, and His512 together coordinate Zn(2+).

This sequence belongs to the class-II aminoacyl-tRNA synthetase family. Homodimer. It depends on Zn(2+) as a cofactor.

The protein localises to the cytoplasm. The catalysed reaction is tRNA(Thr) + L-threonine + ATP = L-threonyl-tRNA(Thr) + AMP + diphosphate + H(+). In terms of biological role, catalyzes the attachment of threonine to tRNA(Thr) in a two-step reaction: L-threonine is first activated by ATP to form Thr-AMP and then transferred to the acceptor end of tRNA(Thr). Also edits incorrectly charged L-seryl-tRNA(Thr). The protein is Threonine--tRNA ligase of Xylella fastidiosa (strain 9a5c).